The sequence spans 432 residues: Adenylosuccinate synthetase (432 aa).

GTP is bound by residues 13–19 (GDEGKGK) and 41–43 (GHT). Asp-14 serves as the catalytic Proton acceptor. Residues Asp-14 and Gly-41 each coordinate Mg(2+). Residues 14 to 17 (DEGK), 39 to 42 (NAGH), Thr-130, Arg-144, Gln-225, Thr-240, and Arg-304 contribute to the IMP site. His-42 serves as the catalytic Proton donor. 300-306 (ATTGRSR) contacts substrate. GTP is bound by residues Arg-306, 332-334 (KLD), and 415-417 (STG).

The protein belongs to the adenylosuccinate synthetase family. Homodimer. Requires Mg(2+) as cofactor.

It is found in the cytoplasm. The catalysed reaction is IMP + L-aspartate + GTP = N(6)-(1,2-dicarboxyethyl)-AMP + GDP + phosphate + 2 H(+). Its pathway is purine metabolism; AMP biosynthesis via de novo pathway; AMP from IMP: step 1/2. Functionally, plays an important role in the de novo pathway of purine nucleotide biosynthesis. Catalyzes the first committed step in the biosynthesis of AMP from IMP. The polypeptide is Adenylosuccinate synthetase (Yersinia pseudotuberculosis serotype O:1b (strain IP 31758)).